The primary structure comprises 177 residues: Eggshell protein (177 aa).

A signal peptide spans 1–18 (MKQSLTLVFLVAIGYATA). A run of 5 repeats spans residues 25-41 (YSGG…CDSG), 42-59 (YGDS…CGGG), 60-75 (YGGG…DCGN), 76-91 (YGGG…DCGN), and 92-112 (YGGG…CGGG). A 5 X approximate tandem repeats region spans residues 25-112 (YSGGYGGGCY…GCSGGNCGGG (88 aa)). Positions 149-166 (GSGKGKGGGKGGKGGKGG) are enriched in gly residues. The tract at residues 149–177 (GSGKGKGGGKGGKGGKGGTYKPSHYGGGY) is disordered.

This Schistosoma mansoni (Blood fluke) protein is Eggshell protein.